The chain runs to 389 residues: Type II methyltransferase M2.BsuMI (389 aa).

The region spanning 1–299 (MKVVSLFSGI…ENLSQPKGSI (299 aa)) is the SAM-dependent MTase C5-type domain. Cysteine 69 is a catalytic residue.

This sequence belongs to the class I-like SAM-binding methyltransferase superfamily. C5-methyltransferase family. Monomer. May form a complex with YdiP, also seems to be active alone.

It catalyses the reaction a 2'-deoxycytidine in DNA + S-adenosyl-L-methionine = a 5-methyl-2'-deoxycytidine in DNA + S-adenosyl-L-homocysteine + H(+). Its activity is regulated as follows. Somewhat inhibited by MgCl(2) and spermidine, strongly inhibited by MnCl(2). Its function is as follows. A methylase, recognizes the double-stranded sequence 5'-YTCGAR-3', methylates C-3 on both strands, and protects the DNA from cleavage by the BsuMI endonuclease. The chain is Type II methyltransferase M2.BsuMI (ydiP) from Bacillus subtilis (strain 168).